Consider the following 973-residue polypeptide: Piwi-like protein 2 (973 aa).

The segment at 28-65 (WPQASKPLDPALGRGAPAGRGHVFGKPEEPSTQRGPAQ) is disordered. Positions 34-48 (PLDPALGRGAPAGRG) are enriched in low complexity. R47 bears the Symmetric dimethylarginine mark. 2 positions are modified to omega-N-methylarginine; by PRMT5; alternate: R76 and R97. Position 76 is a symmetric dimethylarginine; by PRMT5; alternate (R76). Position 97 is a symmetric dimethylarginine; alternate (R97). R102 is subject to Symmetric dimethylarginine; by PRMT5; alternate. Omega-N-methylarginine; alternate is present on R102. 2 positions are modified to symmetric dimethylarginine: R146 and R158. Residues 162–199 (GISREVDKPPCTFSTPSRGPPQLSSPPALPQSPLHSPD) are disordered. At R165 the chain carries Symmetric dimethylarginine; by PRMT5. One can recognise a PAZ domain in the interval 389–502 (CVLDVMHAIY…LLPELSFMTG (114 aa)). The residue at position 551 (R551) is a Symmetric dimethylarginine; by PRMT5. The region spanning 668–959 (MVVCIIMGPR…LAFLSGHILH (292 aa)) is the Piwi domain. Catalysis depends on residues D745, E783, D815, and H948.

The protein belongs to the argonaute family. Piwi subfamily. In terms of assembly, interacts with DDX4, MAEL, EIF3A, EIF4E, EIF4G, PRMT5 and WDR77. Associates with EIF4E- and EIF4G-containing m7G cap-binding complexes. Interacts (when methylated on arginine residues) with TDRD1 and TDRKH/TDRD2. Interacts with TDRD12. Component of the PET complex, at least composed of EXD1, PIWIL2, TDRD12 and piRNAs. Interacts with MOV10L1. Interacts with GPAT2. Interacts with TEX19. Interacts with GSK3B. Interacts (via PIWI domain) with BMAL1 and CLOCK. Interacts with TEX15. Mg(2+) serves as cofactor. Arginine methylation by PRMT5 is required for the interaction with Tudor domain-containing protein TDRD1 and subsequent localization to the meiotic nuage, also named P granule. Expressed in adult testis and in most tumors.

It localises to the cytoplasm. Endoribonuclease that plays a central role during spermatogenesis by repressing transposable elements and preventing their mobilization, which is essential for the germline integrity. Plays an essential role in meiotic differentiation of spermatocytes, germ cell differentiation and in self-renewal of spermatogonial stem cells. Acts via the piRNA metabolic process, which mediates the repression of transposable elements during meiosis by forming complexes composed of piRNAs and Piwi proteins and govern the methylation and subsequent repression of transposons. During piRNA biosynthesis, plays a key role in the piRNA amplification loop, also named ping-pong amplification cycle, by acting as a 'slicer-competent' piRNA endoribonuclease that cleaves primary piRNAs, which are then loaded onto 'slicer-incompetent' PIWIL4. PIWIL2 slicing produces a pre-miRNA intermediate, which is then processed in mature piRNAs, and as well as a 16 nucleotide by-product that is degraded. Required for PIWIL4/MIWI2 nuclear localization and association with secondary piRNAs antisense. Besides their function in transposable elements repression, piRNAs are probably involved in other processes during meiosis such as translation regulation. Indirectly modulates expression of genes such as PDGFRB, SLC2A1, ITGA6, GJA7, THY1, CD9 and STRA8. When overexpressed, acts as an oncogene by inhibition of apoptosis and promotion of proliferation in tumors. Represses circadian rhythms by promoting the stability and activity of core clock components BMAL1 and CLOCK by inhibiting GSK3B-mediated phosphorylation and ubiquitination-dependent degradation of these proteins. The chain is Piwi-like protein 2 (PIWIL2) from Homo sapiens (Human).